The sequence spans 529 residues: Zinc finger protein 572 (529 aa).

A disordered region spans residues 1 to 62 (MEQEKKLLVS…EWSKRHRPQH (62 aa)). Residues Lys-5 and Lys-6 each participate in a glycyl lysine isopeptide (Lys-Gly) (interchain with G-Cter in SUMO2) cross-link. Residues 26 to 35 (TGDTSMNNLE) are compositionally biased toward polar residues. Residues 36 to 55 (TVHHNNSKADKLKEKPSEWS) show a composition bias toward basic and acidic residues. 12 consecutive C2H2-type zinc fingers follow at residues 132-154 (YKCS…QRTH), 160-182 (YKCS…LRMH), 188-210 (YQCG…ERTH), 216-238 (YKCP…HRSH), 244-266 (YECS…QRTH), 272-294 (YKCP…QRTH), 300-322 (YKCL…QRIH), 328-350 (YQCP…QKMH), 384-406 (YRCC…QRTH), 412-434 (YRCS…QRTH), 440-462 (YKCP…RRTH), and 468-490 (YKCT…RKIH).

It belongs to the krueppel C2H2-type zinc-finger protein family.

The protein resides in the nucleus. In terms of biological role, may be involved in transcriptional regulation. The sequence is that of Zinc finger protein 572 (ZNF572) from Homo sapiens (Human).